Reading from the N-terminus, the 2948-residue chain is Transforming acidic coiled-coil-containing protein 2 (2948 aa).

Residues 1–30 (MGNENSTSDNQRTLSAQTPRSAQPPGNSQN) show a composition bias toward polar residues. Disordered regions lie at residues 1 to 304 (MGNE…TDDL), 314 to 333 (RSNSGAAPEAEVNAASQESC), 392 to 453 (AAGG…MPVS), 465 to 785 (LVGL…PQGE), 825 to 964 (SSEK…VSPP), 985 to 1050 (CTGQ…QPDS), 1062 to 1154 (ALAP…GEAT), 1243 to 1274 (AAQRGAEDSGVKAVSSADPRAPGESPCPVGEP), 1296 to 1400 (QPGA…EQIA), 1427 to 1463 (PGEKAGAGRSAVGKDLTRPLGPEKLLDGPPGVDVTLL), 1493 to 1661 (ASDK…GERR), 1675 to 1705 (LGNQSTPAPPTGEVADTPLEPGKVAGAAGEA), 1741 to 1878 (VLPG…ESPT), 1907 to 2035 (HAGL…SSGT), and 2052 to 2460 (LEPR…ETPP). Over residues 174 to 184 (GRERQPKEEGQ) the composition is skewed to basic and acidic residues. Phosphoserine occurs at positions 197, 201, and 269. Residue valine 325 is modified to Phosphothreonine. Serine 493 is modified (phosphoserine). Basic and acidic residues predominate over residues 496–507 (ERGEHLNTEQSH). Residues serine 561, serine 571, and serine 575 each carry the phosphoserine modification. Basic and acidic residues predominate over residues 604–629 (SKRDPEVGKDELSKPSSDAESRDHPS). Serine 758 is modified (phosphoserine). Residues 911–926 (SDTPTSSPTDMVWESS) are compositionally biased toward low complexity. Residue serine 962 is modified to Phosphoserine. A compositionally biased stretch (polar residues) spans 985–996 (CTGQGPNKSQQA). Phosphoserine is present on serine 1025. 2 positions are modified to phosphoserine: serine 1267 and serine 1313. The span at 1348 to 1357 (ATAPGAGAKA) shows a compositional bias: low complexity. Over residues 1383–1400 (DPKQGTSGGVDTSSEQIA) the composition is skewed to polar residues. At serine 1562 the chain carries Phosphoserine. Basic and acidic residues-rich tracts occupy residues 1801 to 1823 (DETHDPKLQHLAPEELHTDRESP) and 1834 to 1854 (PKKDAPRVMDKVTSDETRGAE). The segment covering 1862–1873 (ADDIIQPAAPAD) has biased composition (low complexity). Positions 1939-1948 (PAKDLSRSSD) are enriched in basic and acidic residues. The span at 1963-1976 (KAPPAPPPPPPEVI) shows a compositional bias: pro residues. Serine 2072 carries the phosphoserine modification. Polar residues predominate over residues 2074-2102 (DSVPISKSTLSRSLSLQASDFDGASSSGN). Low complexity predominate over residues 2114 to 2124 (STGSSSASSTL). Residues 2125 to 2141 (KRTKKPRPPSLKKKQTT) show a composition bias toward basic residues. Residues serine 2161 and serine 2226 each carry the phosphoserine modification. Threonine 2246 is subject to Phosphothreonine. Serine 2256 is subject to Phosphoserine. Basic and acidic residues predominate over residues 2265–2275 (LEFDYSEDKSS). The segment covering 2288–2305 (KIGKKPVAKMPLRRPKMK) has biased composition (basic residues). In terms of domain architecture, SPAZ spans 2315–2403 (PASPPRSPAE…SPASFEIPAS (89 aa)). Phosphoserine occurs at positions 2317, 2321, 2359, 2389, 2392, 2394, and 2403. Over residues 2348-2368 (NPFSSTSKMQESPKLPQQSYN) the composition is skewed to polar residues. Low complexity predominate over residues 2382 to 2395 (KTSSKTPSSPSKSP). Residues threonine 2430, threonine 2451, threonine 2455, and threonine 2458 each carry the phosphothreonine modification. 2 positions are modified to phosphoserine: serine 2512 and serine 2534. Residue threonine 2553 is modified to Phosphothreonine. The disordered stretch occupies residues 2555–2577 (QESPVKSSPVRMSESPTPCSGSS). A phosphoserine mark is found at serine 2557 and serine 2569. Positions 2568–2577 (ESPTPCSGSS) are enriched in polar residues. Threonine 2625 carries the phosphothreonine modification. 2 coiled-coil regions span residues 2675 to 2703 (AQKLQEELEFAIMRIEALKLARQIALASR) and 2746 to 2947 (DLDS…KMGK).

The protein belongs to the TACC family. As to quaternary structure, interacts with CCDC100/CEP120. Interacts with microtubules. Interacts with YEATS4, GCN5L2 and PCAF. Post-translationally, phosphorylated by TTK; which is required for localization in centrosome. Strongly expressed in heart, skeletal muscle, brain, prostate, thyroid and trachea.

Its subcellular location is the cytoplasm. The protein resides in the nucleus. The protein localises to the cytoskeleton. It localises to the microtubule organizing center. It is found in the centrosome. Plays a role in the microtubule-dependent coupling of the nucleus and the centrosome. Involved in the processes that regulate centrosome-mediated interkinetic nuclear migration (INM) of neural progenitors. May play a role in organizing centrosomal microtubules. May act as a tumor suppressor protein. May represent a tumor progression marker. This chain is Transforming acidic coiled-coil-containing protein 2 (TACC2), found in Homo sapiens (Human).